We begin with the raw amino-acid sequence, 1978 residues long: Dedicator of cytokinesis protein 4 (1978 aa).

One can recognise an SH3 domain in the interval 6 to 67 (EHEKYGVVIA…PSSYVHLKNA (62 aa)). Phosphotyrosine is present on Y167. Phosphothreonine is present on T193. Residues 401–574 (RNDLYITVER…ESFWITSFLC (174 aa)) enclose the C2 DOCK-type domain. The region spanning 1199–1605 (KTELNKEEMY…FGIQEFPACI (407 aa)) is the DOCKER domain. Phosphoserine is present on residues S1608, S1616, S1623, S1627, S1629, and S1640. Disordered regions lie at residues 1657–1738 (SQAS…IYPT) and 1751–1978 (IGDG…VSQL). Residues 1681 to 1712 (PSPSTSSLSSTHSASPNVTSSAPSSARASPLL) show a composition bias toward low complexity. S1778 bears the Phosphoserine mark. The short motif at 1797–1803 (PPVPPRP) is the SH3-binding element. Residues 1804-1818 (TQTASPARHTTSVSP) are compositionally biased toward polar residues. The span at 1842–1872 (SPGLSSNSPVLSGSYSSGISSLSRCSTSETS) shows a compositional bias: low complexity. Polar residues predominate over residues 1873–1882 (GFENQANEQS). Residues 1885–1895 (VPVPVPVPVPV) are compositionally biased toward pro residues. Basic and acidic residues predominate over residues 1953–1966 (SHLENGTRRTEPGP).

It belongs to the DOCK family. In terms of assembly, interacts with nucleotide-free Rap1; functions as a guanine nucleotide exchange factor (GEF) for Rap1. Interacts (via DOCKER domain) with RAC1; functions as a guanine nucleotide exchange factor (GEF) for RAC1. Interacts with the SH3 domain of CRK. Interacts with FASLG. Interacts with ELMO2 and EPHA2; mediates activation of RAC1 by EPHA2. Interacts with USH1C (via PDZ 1 domain). In terms of tissue distribution, expressed in inner ear (at protein level).

The protein localises to the cell membrane. It localises to the cytoplasm. The protein resides in the cytosol. In terms of biological role, functions as a guanine nucleotide exchange factor (GEF) that promotes the exchange of GDP to GTP, converting inactive GDP-bound small GTPases into their active GTP-bound form. Involved in regulation of adherens junction between cells. Plays a role in cell migration. Functionally, has a higher guanine nucleotide exchange factor activity compared to other isoforms. In Mus musculus (Mouse), this protein is Dedicator of cytokinesis protein 4 (Dock4).